The primary structure comprises 902 residues: Desmocollin-2 (902 aa).

The first 27 residues, 1–27 (MAAVGSMRSGSPAFGLGHLLTLAILAL), serve as a signal peptide directing secretion. A propeptide spanning residues 28 to 135 (ASDACKEVVL…TEKVLSRAKR (108 aa)) is cleaved from the precursor. Cadherin domains follow at residues 136–243 (RWAP…YPIF), 244–355 (TQKL…LPTF), 356–471 (TRTT…GPEC), 472–579 (IPPM…FIPK), and 580–694 (QTVV…RLGP). Over 136–694 (RWAPIPCSML…TGYADVRLGP (559 aa)) the chain is Extracellular. Residue asparagine 166 is glycosylated (N-linked (GlcNAc...) asparagine). N-linked (GlcNAc...) asparagine glycans are attached at residues asparagine 392, asparagine 546, and asparagine 629. A helical membrane pass occupies residues 695–715 (WAILAILLGIALLFCILFTLV). The Cytoplasmic segment spans residues 716-902 (CSVSRASKQQ…RTLAEVCAKR (187 aa)). Phosphoserine occurs at positions 865, 869, and 874.

In terms of assembly, interacts with DSP, PKP2 and JUP. Interacts with DSG3; the interaction may limit the interaction of DSC3 with p38MAPK family members and therefore repress p38MAPK signaling activation. Expressed in intestinal epithelial cells (at protein level). Expressed in the heart. Expressed in tongue, bladder, stomach, liver, kidney, and lung.

It localises to the cell membrane. It is found in the cell junction. The protein localises to the desmosome. Functionally, a component of desmosome cell-cell junctions which are required for positive regulation of cellular adhesion. Promotes timely incorporation of DSG2 into desmosome intercellular junctions and promotes interaction of desmosome cell junctions with intermediate filament cytokeratin, via modulation of DSP phosphorylation. Plays an important role in desmosome-mediated maintenance of intestinal epithelial cell intercellular adhesion strength and barrier function. Positively regulates wound healing of intestinal mucosa via promotion of epithelial cell migration, and also plays a role in mechanotransduction of force between intestinal epithelial cells and extracellular matrix. May contribute to epidermal cell positioning (stratification) by mediating differential adhesiveness between cells that express different isoforms. May promote p38MAPK signaling activation that facilitates keratinocyte migration. This chain is Desmocollin-2 (Dsc2), found in Mus musculus (Mouse).